Here is a 355-residue protein sequence, read N- to C-terminus: Glutamyl aminopeptidase (355 aa).

The a divalent metal cation site is built by His65 and Asp181. Glu213 acts as the Proton acceptor in catalysis. Residues Glu214, Asp236, and His319 each coordinate a divalent metal cation.

It belongs to the peptidase M42 family. The cofactor is a divalent metal cation.

It carries out the reaction Release of N-terminal glutamate (and to a lesser extent aspartate) from a peptide.. This is Glutamyl aminopeptidase (pepA) from Lactococcus lactis subsp. cremoris (strain MG1363).